Consider the following 462-residue polypeptide: GTPase Der (462 aa).

2 consecutive EngA-type G domains span residues 3-166 (PVIA…ITEM) and 175-348 (IKIA…HSAI). Residues 9–16 (GRPNVGKS), 56–60 (DTGGI), 118–121 (NKTD), 181–188 (GRPNVGKS), 228–232 (DTAGV), and 293–296 (NKWD) contribute to the GTP site. The KH-like domain maps to 349-433 (QSFSTPKLTR…PLKIEFKGGQ (85 aa)).

Belongs to the TRAFAC class TrmE-Era-EngA-EngB-Septin-like GTPase superfamily. EngA (Der) GTPase family. In terms of assembly, associates with the 50S ribosomal subunit.

GTPase that plays an essential role in the late steps of ribosome biogenesis. This Legionella pneumophila (strain Lens) protein is GTPase Der.